Consider the following 474-residue polypeptide: Ankyrin repeat, SAM and basic leucine zipper domain-containing protein 1 (474 aa).

Residues 1 to 31 are disordered; it reads MAGRLRGPAVPGGGESSDSDEDGWDIGYTER. Residues serine 16, serine 17, and serine 19 each carry the phosphoserine modification. ANK repeat units follow at residues 43 to 72, 76 to 105, 108 to 142, 146 to 175, 179 to 208, and 212 to 241; these read EKDE…QVDS, FGWT…NASF, DQHT…SPNA, KRMS…EINA, NGYT…DKTL, and DGKT…PLHG. The 64-residue stretch at 270–333 folds into the SAM domain; it reads SYSAFGDLEI…KIMDAVEELQ (64 aa).

In terms of assembly, interacts with DDX4, PIWIL1, RANBP9 and TDRD1.

The protein localises to the cytoplasm. Plays a central role during spermatogenesis by repressing transposable elements and preventing their mobilization, which is essential for the germline integrity. Acts via the piRNA metabolic process, which mediates the repression of transposable elements during meiosis by forming complexes composed of piRNAs and Piwi proteins and governs the methylation and subsequent repression of transposons. Its association with pi-bodies suggests a participation in the primary piRNAs metabolic process. Required prior to the pachytene stage to facilitate the production of multiple types of piRNAs, including those associated with repeats involved in the regulation of retrotransposons. May act by mediating protein-protein interactions during germ cell maturation. In Ornithorhynchus anatinus (Duckbill platypus), this protein is Ankyrin repeat, SAM and basic leucine zipper domain-containing protein 1 (ASZ1).